The primary structure comprises 184 residues: Cysteine-rich atrial secretory protein (184 aa).

An N-terminal signal peptide occupies residues 1 to 26 (MATFQAHFFAAVMCVGVLGLSKLCGA). Disulfide bonds link C29-C34, C65-C111, C75-C82, C123-C155, and C135-C144. The N-linked (GlcNAc...) asparagine glycan is linked to N74.

N-glycosylated. Highly expressed in atrium. Moderately expressed in the pericardium, pulmonary vein, nephridium, arteria anterior, ovotestis and connective tissue. Low expression found in intestine, lung plexus, diaphragm, subesophageal ganglion, ventricle and digestive gland. Very low expression found in columellar retractor, pedal nerves and cerebral ganglion. Not expressed in hemocytes.

The protein localises to the secreted. This is Cysteine-rich atrial secretory protein from Achatina achatina (Giant Ghana snail).